The primary structure comprises 513 residues: GMP synthase [glutamine-hydrolyzing] (513 aa).

The Glutamine amidotransferase type-1 domain maps to 7–198; that stretch reads LIVVVDFGGQ…LFNIAGCRGD (192 aa). Residue C84 is the Nucleophile of the active site. Residues H172 and E174 contribute to the active site. A GMPS ATP-PPase domain is found at 199 to 388; that stretch reads WTTESFITRQ…LGVPEEIVGR (190 aa). 226 to 232 provides a ligand contact to ATP; it reads SGGVDSS.

Homodimer.

The enzyme catalyses XMP + L-glutamine + ATP + H2O = GMP + L-glutamate + AMP + diphosphate + 2 H(+). The protein operates within purine metabolism; GMP biosynthesis; GMP from XMP (L-Gln route): step 1/1. Its function is as follows. Catalyzes the synthesis of GMP from XMP. The protein is GMP synthase [glutamine-hydrolyzing] of Symbiobacterium thermophilum (strain DSM 24528 / JCM 14929 / IAM 14863 / T).